Reading from the N-terminus, the 386-residue chain is Succinyl-diaminopimelate desuccinylase (386 aa).

His77 contributes to the Zn(2+) binding site. The active site involves Asp79. Asp110 is a Zn(2+) binding site. Residue Glu144 is the Proton acceptor of the active site. Glu145, Glu173, and His359 together coordinate Zn(2+).

The protein belongs to the peptidase M20A family. DapE subfamily. In terms of assembly, homodimer. Requires Zn(2+) as cofactor. Co(2+) is required as a cofactor.

It catalyses the reaction N-succinyl-(2S,6S)-2,6-diaminopimelate + H2O = (2S,6S)-2,6-diaminopimelate + succinate. It functions in the pathway amino-acid biosynthesis; L-lysine biosynthesis via DAP pathway; LL-2,6-diaminopimelate from (S)-tetrahydrodipicolinate (succinylase route): step 3/3. Functionally, catalyzes the hydrolysis of N-succinyl-L,L-diaminopimelic acid (SDAP), forming succinate and LL-2,6-diaminopimelate (DAP), an intermediate involved in the bacterial biosynthesis of lysine and meso-diaminopimelic acid, an essential component of bacterial cell walls. In Methylibium petroleiphilum (strain ATCC BAA-1232 / LMG 22953 / PM1), this protein is Succinyl-diaminopimelate desuccinylase.